The sequence spans 389 residues: tRNA-specific 2-thiouridylase MnmA (389 aa).

ATP is bound by residues 35 to 42 (GMSGGVDS) and methionine 61. The tract at residues 121-123 (NPD) is interaction with target base in tRNA. The active-site Nucleophile is the cysteine 126. Cysteine 126 and cysteine 223 are disulfide-bonded. Glycine 151 contributes to the ATP binding site. The interval 173–175 (KDQ) is interaction with tRNA. Residue cysteine 223 is the Cysteine persulfide intermediate of the active site. Residues 335–336 (RY) form an interaction with tRNA region.

This sequence belongs to the MnmA/TRMU family.

The protein resides in the cytoplasm. It catalyses the reaction S-sulfanyl-L-cysteinyl-[protein] + uridine(34) in tRNA + AH2 + ATP = 2-thiouridine(34) in tRNA + L-cysteinyl-[protein] + A + AMP + diphosphate + H(+). Functionally, catalyzes the 2-thiolation of uridine at the wobble position (U34) of tRNA, leading to the formation of s(2)U34. The polypeptide is tRNA-specific 2-thiouridylase MnmA (Mannheimia succiniciproducens (strain KCTC 0769BP / MBEL55E)).